A 182-amino-acid polypeptide reads, in one-letter code: Isopentenyl-diphosphate Delta-isomerase (182 aa).

His25 and His32 together coordinate Mn(2+). Positions 30–164 (LLHLAFSSWL…PWAFSPWMVM (135 aa)) constitute a Nudix hydrolase domain. Residue Cys67 is part of the active site. Mn(2+) is bound at residue His69. A Mg(2+)-binding site is contributed by Glu87. Mn(2+) contacts are provided by Glu114 and Glu116. The active site involves Glu116.

Belongs to the IPP isomerase type 1 family. Homodimer. Requires Mg(2+) as cofactor. Mn(2+) serves as cofactor.

The protein resides in the cytoplasm. The catalysed reaction is isopentenyl diphosphate = dimethylallyl diphosphate. It participates in isoprenoid biosynthesis; dimethylallyl diphosphate biosynthesis; dimethylallyl diphosphate from isopentenyl diphosphate: step 1/1. Catalyzes the 1,3-allylic rearrangement of the homoallylic substrate isopentenyl (IPP) to its highly electrophilic allylic isomer, dimethylallyl diphosphate (DMAPP). The protein is Isopentenyl-diphosphate Delta-isomerase of Escherichia coli O9:H4 (strain HS).